We begin with the raw amino-acid sequence, 1476 residues long: MDKKVRYKLRKVKKRWVTVSVASAVMTLTTLSGGLVKADSNESKSQISNDSNTSVVTANEESNVTTEVTSKQEAASSQTNHTVTTISSSTSVVNPKEVVSNPYTVGETASNGEKLQNQTTTVDKTSEAAANNISKQTTEADTDVIDDSNAANLQILEKLPNVKEIDGKYYYYDNNGKVRTNFTLIADGKILHFDETGAYTDTSIDTVNKDIVTTRSNLYKKYNQVYDRSAQSFEHVDHYLTAESWYRPKYILKDGKTWTQSTEKDFRPLLMTWWPSQETQRQYVNYMNAQLGINKTYDDTSNQLQLNIAAATIQAKIEAKITTLKNTDWLRQTISAFVKTQSAWNSDSEKPFDDHLQNGAVLYDNEGKLTPYANSNYRILNRTPTNQTGKKDPRYTADNTIGGYEFLLANDVDNSNPVVQAEQLNWLHFLMNFGNIYANDPDANFDSIRVDAVDNVDADLLQIAGDYLKAAKGIHKNDKAANDHLSILEAWSDNDTPYLHDDGDNMINMDNKLRLSLLFSLAKPLNQRSGMNPLITNSLVNRTDDNAETAAVPSYSFIRAHDSEVQDLIRDIIKAEINPNVVGYSFTMEEIKKAFEIYNKDLLATEKKYTHYNTALSYALLLTNKSSVPRVYYGDMFTDDGQYMAHKTINYEAIETLLKARIKYVSGGQAMRNQQVGNSEIITSVRYGKGALKATDTGDRTTRTSGVAVIEGNNPSLRLKASDRVVVNMGAAHKNQAYRPLLLTTDNGIKAYHSDQEAAGLVRYTNDRGELIFTAADIKGYANPQVSGYLGVWVPVGAAADQDVRVAASTAPSTDGKSVHQNAALDSRVMFEGFSNFQAFATKKEEYTNVVIAKNVDKFAEWGVTDFEMAPQYVSSTDGSFLDSVIQNGYAFTDRYDLGISKPNKYGTADDLVKAIKALHSKGIKVMADWVPDQMYAFPEKEVVTATRVDKFGKPVEGSQIKSVLYVADSKSSGKDQQAKYGGAFLEELQAKYPELFARKQISTGVPMDPSVKIKQWSAKYFNGTNILGRGAGYVLKDQATNTYFNISDNKEINFLPKTLLNQDSQVGFSYDGKGYVYYSTSGYQAKNTFISEGDKWYYFDNNGYMVTGAQSINGVNYYFLSNGLQLRDAILKNEDGTYAYYGNDGRRYENGYYQFMSGVWRHFNNGEMSVGLTVIDGQVQYFDEMGYQAKGKFVTTADGKIRYFDKQSGNMYRNRFIENEEGKWLYLGEDGAAVTGSQTINGQHLYFRANGVQVKGEFVTDRYGRISYYDSNSGDQIRNRFVRNAQGQWFYFDNNGYAVTGARTINGQHLYFRANGVQVKGEFVTDRHGRISYYDGNSGDQIRNRFVRNAQGQWFYFDNNGYAVTGARTINGQHLYFRANGVQVKGEFVTDRYGRISYYDSNSGDQIRNRFVRNAQGQWFYFDNNGYAVTGARTINGQHLYFRANGVQVKGEFVTDRYGRISYYDANSGERVRIN.

Residues 1–34 (MDKKVRYKLRKVKKRWVTVSVASAVMTLTTLSGG) form the signal peptide. Disordered regions lie at residues 42–89 (ESKS…ISSS) and 102–141 (PYTV…TEAD). 2 stretches are compositionally biased toward polar residues: residues 43-81 (SKSQ…QTNH) and 102-139 (PYTV…QTTE). Cell wall-binding repeat units lie at residues 159 to 178 (LPNV…NGKV) and 179 to 199 (RTNF…TGAY). The interval 200-1051 (TDTSIDTVNK…NTYFNISDNK (852 aa)) is catalytic; approximate. Cell wall-binding repeat units lie at residues 1087–1106 (KNTF…NGYM), 1107–1126 (VTGA…NGLQ), 1170–1189 (SVGL…MGYQ), 1214–1234 (RNRF…DGAA), 1235–1254 (VTGS…NGVQ), 1279–1299 (RNRF…NGYA), 1300–1319 (VTGA…NGVQ), 1344–1364 (RNRF…NGYA), 1365–1384 (VTGA…NGVQ), 1409–1429 (RNRF…NGYA), and 1430–1449 (VTGA…NGVQ).

The protein belongs to the glycosyl hydrolase 70 family.

Its subcellular location is the secreted. It catalyses the reaction [(1-&gt;6)-alpha-D-glucosyl](n) + sucrose = [(1-&gt;6)-alpha-D-glucosyl](n+1) + D-fructose. Functionally, production of extracellular glucans, that are thought to play a key role in the development of the dental plaque because of their ability to adhere to smooth surfaces and mediate the aggregation of bacterial cells and food debris. This Streptococcus mutans serotype c (strain ATCC 700610 / UA159) protein is Glucosyltransferase-I (gtfB).